The primary structure comprises 1015 residues: Fibronectin-binding protein A (1015 aa).

Positions 1-36 (MKNNLRYGIRKHKLGAASVFLGTMIVVGMGQDKEAA) are cleaved as a signal peptide. The short motif at 7–18 (YGIRKHKLGAAS) is the YSIRK-G/S signaling motif element. The ligand-binding A region stretch occupies residues 37 to 512 (ASEQKTTTVE…SNKADGNGKN (476 aa)). A compositionally biased stretch (polar residues) spans 75–92 (SYSATATEQPSNATQVTT). A disordered region spans residues 75–199 (SYSATATEQP…KVETGTDVTS (125 aa)). Positions 112–126 (TVKEEVVKEEAKPQV) are enriched in basic and acidic residues. Positions 129–139 (TTQSQDNSGDQ) are enriched in polar residues. The segment covering 179–193 (DVVEAKEASDEKVET) has biased composition (basic and acidic residues). The tract at residues 194 to 512 (GTDVTSKVTV…SNKADGNGKN (319 aa)) is fibrinogen/elastin/tropoelastin-binding. A fibronectin-binding region spans residues 513 to 873 (GQIIQNNDFE…EGQQTIEEDT (361 aa)). A B-1 repeat occupies 546–575 (ENQDNTPLDIDYHTAIDGEGGYVDGYIETI). The tract at residues 546 to 605 (ENQDNTPLDIDYHTAIDGEGGYVDGYIETIEETDSSAIDIDYHTAVDSEAGHVGGYTESS) is 2 X approximate tandem repeats. A B-2 repeat occupies 576-605 (EETDSSAIDIDYHTAVDSEAGHVGGYTESS). Disordered regions lie at residues 596–623 (GHVG…NSKH), 741–815 (LGYE…IDFD), 828–953 (EIIE…GKVV), and 966–992 (VAPT…NKGM). One copy of the D-1 repeat lies at 746 to 783 (GQNSGNQSFEEDTEEDKPKYEQGGNIVDIDFDSVPQIQ). Residues 746–875 (GQNSGNQSFE…QQTIEEDTTP (130 aa)) form a 4 X approximate tandem repeats region. The segment covering 780-791 (PQIQGQNNGNQS) has biased composition (polar residues). The D-2 repeat unit spans residues 784–821 (GQNNGNQSFEEDTEKDKPKYEQGGNIIDIDFDSVPQIH). The stretch at 822–860 (GFNKHTEIIEEDTNKDKPNYQFGGHNSVDFEEDTLPKVS) is one D-3 repeat. Residues 828-839 (EIIEEDTNKDKP) are compositionally biased toward basic and acidic residues. A D-4; truncated repeat occupies 861–875 (GQNEGQQTIEEDTTP). Over residues 875–935 (PPTPPTPEVP…PAEPGKPVPP (61 aa)) the composition is skewed to pro residues. WR repeat units follow at residues 876–889 (PTPP…EPET), 890–903 (PTPP…EPET), 904–917 (PTPP…EPET), 918–931 (PTPP…EPGK), and 932–945 (PVPP…KPSK). The tract at residues 876 to 945 (PTPPTPEVPS…AKEEPKKPSK (70 aa)) is 5 X tandem repeats, Pro-rich (WR). The short motif at 979–983 (LPETG) is the LPXTG sorting signal element. Pentaglycyl murein peptidoglycan amidated threonine is present on threonine 982. Positions 983–1015 (GGEESTNKGMLFGGLFSILGLALLRRNKKNNKA) are cleaved as a propeptide — removed by sortase.

It is found in the secreted. It localises to the cell wall. Its function is as follows. Promotes bacterial attachment to multiple substrates, such as fibronectin (Fn), fibrinogen (Fg), elastin peptides and tropoelastin. This confers to S.aureus the ability to invade endothelial cells. Promotes adherence to and aggregation of activated platelets. This is Fibronectin-binding protein A (fnbA) from Staphylococcus aureus (strain MSSA476).